The primary structure comprises 185 residues: Ribosome-recycling factor (185 aa).

It belongs to the RRF family.

The protein localises to the cytoplasm. Its function is as follows. Responsible for the release of ribosomes from messenger RNA at the termination of protein biosynthesis. May increase the efficiency of translation by recycling ribosomes from one round of translation to another. The chain is Ribosome-recycling factor from Streptococcus pneumoniae serotype 2 (strain D39 / NCTC 7466).